We begin with the raw amino-acid sequence, 700 residues long: Elongation factor G (700 aa).

One can recognise a tr-type G domain in the interval 8–290; that stretch reads ERYRNIGISA…AVIDYLPSPV (283 aa). GTP-binding positions include 17 to 24, 88 to 92, and 142 to 145; these read AHIDAGKT, DTPGH, and NKMD.

The protein belongs to the TRAFAC class translation factor GTPase superfamily. Classic translation factor GTPase family. EF-G/EF-2 subfamily.

Its subcellular location is the cytoplasm. Catalyzes the GTP-dependent ribosomal translocation step during translation elongation. During this step, the ribosome changes from the pre-translocational (PRE) to the post-translocational (POST) state as the newly formed A-site-bound peptidyl-tRNA and P-site-bound deacylated tRNA move to the P and E sites, respectively. Catalyzes the coordinated movement of the two tRNA molecules, the mRNA and conformational changes in the ribosome. The sequence is that of Elongation factor G from Paracidovorax citrulli (strain AAC00-1) (Acidovorax citrulli).